The chain runs to 89 residues: DNA maturase A (89 aa).

In terms of assembly, gp18 and gp19 associate with DNA and prohead.

Its function is as follows. During the growth of this phage, DNA is synthesized as concatemers. During DNA packaging mature monomers are cut from the concatemers. The protein is DNA maturase A (18) of Enterobacteria phage T3 (Bacteriophage T3).